The sequence spans 359 residues: Oxopyrrolidines biosynthesis cluster protein G (359 aa).

The tract at residues 1–32 (MDHLRDSLLSSLPRDSPSIGAMDYARRDREST) is disordered. Residues 7 to 18 (SLLSSLPRDSPS) show a composition bias toward low complexity.

Functionally, part of the gene cluster that mediates the biosynthesis of oxopyrrolidines, polyketide-amino acid hybrid compounds with feature structures of tetramic acid. Does not seem to play a role in oxopyrrolidines A and B biosynthesis. In Penicillium oxalicum (strain 114-2 / CGMCC 5302) (Penicillium decumbens), this protein is Oxopyrrolidines biosynthesis cluster protein G.